A 691-amino-acid polypeptide reads, in one-letter code: MTLQVCKDDPWLKPFEEELLRRQALVGQWKDHFAKEGGLAEFAASYKRYGLHVNKDNSVTYREWAPGASEAVLTGDFNGWDRQQYHMTRDEYGLWSVTVPPTSDGQVAIPHNSKVKLALKTSNGQWVDRLPAWSTYVVQDLSKSPIYEAVFWNPPESEKYQWKNKSPPTPANAQIYEAHVGISSSEPRVGTYKEFTKNILPRIHKLGYNVIQLMAIMEHAYYASFGYQVTSFYAISSRYGTPEDLKELIDTAHGMGITVLLDVVHSHACKNVDDGLNNFDGTDHQYFHGGAKGDHPQWDSKLFDYGKYEVLRFLLSNLRFYIEEYHFDGFRFDGVTSMLYKHHGLGTGFSGGYHEYFGDEHVDQQAVVYLMLAHELMRELQPLLRPGEDAGNFLSIAEDVSGMPALCRPVSEGGVGFDYRLAMAIPDMWIKLVKETRDEDWDMGNIVFTLTNRRHREKTIAYAESHDQALVGDKTLAFWLMDKEMYTSMSVLSDPNPIIDRGIALHKMIRLITHSLGGEGYLNFEGNEFGHPEWLDFPREGNGSSFHYCRRQWPVVDDKLLRYQHLNEFDAAMQHRGDHYGWLSADQAYVSLKNEDDKVVVYERAGLVFVFNFHPNKSFTDYRIGVDQPGTYTLVLDSDSPEFGGFGRIDHEKTRCHTEPLEWNGRANCMHIYIPSRVALVFAREDDPRRK.

2 residues coordinate (1,4-alpha-D-glucosyl)n: W80 and K116. D333 (nucleophile) is an active-site residue. E398 serves as the catalytic Proton donor.

This sequence belongs to the glycosyl hydrolase 13 family. GlgB subfamily.

It is found in the cytoplasm. The catalysed reaction is Transfers a segment of a (1-&gt;4)-alpha-D-glucan chain to a primary hydroxy group in a similar glucan chain.. It participates in glycan biosynthesis; glycogen biosynthesis. Its function is as follows. Glycogen-branching enzyme participates in the glycogen biosynthetic process along with glycogenin and glycogen synthase. Generates alpha-1,6-glucosidic branches from alpha-1,4-linked glucose chains, to increase solubility of the glycogen polymer. The sequence is that of 1,4-alpha-glucan-branching enzyme (GLC3) from Yarrowia lipolytica (strain CLIB 122 / E 150) (Yeast).